The sequence spans 188 residues: Urease accessory protein UreE (188 aa).

A disordered region spans residues Ala-142–Ser-174. The span at His-157–Ala-172 shows a compositional bias: basic and acidic residues.

This sequence belongs to the UreE family.

It is found in the cytoplasm. Its function is as follows. Involved in urease metallocenter assembly. Binds nickel. Probably functions as a nickel donor during metallocenter assembly. The sequence is that of Urease accessory protein UreE from Tolumonas auensis (strain DSM 9187 / NBRC 110442 / TA 4).